A 380-amino-acid chain; its full sequence is 1-deoxy-D-xylulose 5-phosphate reductoisomerase (380 aa).

NADPH contacts are provided by Thr-10, Gly-11, Ser-12, Ile-13, Gly-36, Arg-37, Asn-38, and Asn-120. Lys-121 provides a ligand contact to 1-deoxy-D-xylulose 5-phosphate. Glu-122 lines the NADPH pocket. Position 146 (Asp-146) interacts with Mn(2+). 1-deoxy-D-xylulose 5-phosphate is bound by residues Ser-147, Glu-148, Ser-172, and His-195. Glu-148 lines the Mn(2+) pocket. Gly-201 is an NADPH binding site. Positions 208, 213, 214, and 217 each coordinate 1-deoxy-D-xylulose 5-phosphate. Mn(2+) is bound at residue Glu-217.

This sequence belongs to the DXR family. Mg(2+) is required as a cofactor. It depends on Mn(2+) as a cofactor.

The catalysed reaction is 2-C-methyl-D-erythritol 4-phosphate + NADP(+) = 1-deoxy-D-xylulose 5-phosphate + NADPH + H(+). It functions in the pathway isoprenoid biosynthesis; isopentenyl diphosphate biosynthesis via DXP pathway; isopentenyl diphosphate from 1-deoxy-D-xylulose 5-phosphate: step 1/6. Its function is as follows. Catalyzes the NADPH-dependent rearrangement and reduction of 1-deoxy-D-xylulose-5-phosphate (DXP) to 2-C-methyl-D-erythritol 4-phosphate (MEP). The protein is 1-deoxy-D-xylulose 5-phosphate reductoisomerase of Listeria welshimeri serovar 6b (strain ATCC 35897 / DSM 20650 / CCUG 15529 / CIP 8149 / NCTC 11857 / SLCC 5334 / V8).